The primary structure comprises 402 residues: Multidrug resistance protein MdtH (402 aa).

A run of 11 helical transmembrane segments spans residues 13–33 (YFLLIDNMLVVLGFFVVFPLI), 34–54 (SIRFVDSLGWAALMVGIALGL), 99–116 (PWVLWLSCVLSGLGGTLF), 139–159 (LLMMQDSAGAVTGALIGSWLL), 165–185 (LVCGVGALLFVLCAGFNAWLL), 214–234 (VLTLTGYYMLAVQVMLMLPVM), 243–263 (AAVKWMYAIEAVLSLTLLYPL), 277–297 (LMAGLLVMTFSLVPIGLASNL), 300–320 (LFTLICLFYIGSIIAEPARET), 340–360 (LGLAFGGALGYAGGGWLFDAG), and 368–388 (LPWAMLGVIGVGTFLMLWWQF).

Belongs to the major facilitator superfamily. DHA1 family. MdtH (TC 2.A.1.2.21) subfamily.

It is found in the cell inner membrane. This chain is Multidrug resistance protein MdtH, found in Cronobacter sakazakii (strain ATCC BAA-894) (Enterobacter sakazakii).